Consider the following 298-residue polypeptide: Trimeric intracellular cation channel type A (298 aa).

The Lumenal portion of the chain corresponds to Met-1–Arg-18. The helical transmembrane segment at Val-19–Tyr-39 threads the bilayer. At Glu-40 to Pro-51 the chain is on the cytoplasmic side. A helical membrane pass occupies residues Val-52 to Leu-72. At Leu-73 to Ser-85 the chain is on the lumenal side. Position 74 (Gly-74) interacts with Ca(2+). A helical transmembrane segment spans residues Ser-86–Tyr-106. Over Lys-107–Gly-144 the chain is Cytoplasmic. Lys-122 and Arg-126 together coordinate a 1,2-diacyl-sn-glycero-3-phospho-(1D-myo-inositol-4,5-bisphosphate). Residues Trp-145 to Val-165 form a helical membrane-spanning segment. At Glu-166–Asn-178 the chain is on the lumenal side. A helical transmembrane segment spans residues Glu-179–Leu-199. Over Gln-200–Lys-209 the chain is Cytoplasmic. Residues Ala-210–Thr-230 traverse the membrane as a helical segment. The Lumenal segment spans residues His-231–Ser-234. A helical membrane pass occupies residues Ser-235–Gly-255. The Cytoplasmic portion of the chain corresponds to Asp-256–Asp-298. The interval Asp-260–Asp-298 is disordered. The span at Lys-280 to Ser-289 shows a compositional bias: basic and acidic residues.

It belongs to the TMEM38 family. Homotrimer; conformation seems to be controled by binding to diacylglycerol (DAG). As to expression, expressed at high levels in heart and striated muscle. Also detected in brain, lung and kidney.

It localises to the sarcoplasmic reticulum membrane. It is found in the nucleus membrane. It catalyses the reaction K(+)(in) = K(+)(out). Its activity is regulated as follows. Channel activity is activated by a change of voltage within the sarcoplasmic reticulum lumen and blocked by luminal high Ca(2+) levels. In terms of biological role, intracellular monovalent cation channel required for maintenance of rapid intracellular calcium release. Acts as a potassium counter-ion channel that functions in synchronization with calcium release from intracellular stores. Opened by a change of voltage within the sarcoplasmic reticulum lumen. This is Trimeric intracellular cation channel type A (Tmem38a) from Mus musculus (Mouse).